Reading from the N-terminus, the 144-residue chain is 3-hydroxyacyl-[acyl-carrier-protein] dehydratase FabZ (144 aa).

His-51 is an active-site residue.

This sequence belongs to the thioester dehydratase family. FabZ subfamily.

Its subcellular location is the cytoplasm. It catalyses the reaction a (3R)-hydroxyacyl-[ACP] = a (2E)-enoyl-[ACP] + H2O. Involved in unsaturated fatty acids biosynthesis. Catalyzes the dehydration of short chain beta-hydroxyacyl-ACPs and long chain saturated and unsaturated beta-hydroxyacyl-ACPs. In Lactococcus lactis subsp. lactis (strain IL1403) (Streptococcus lactis), this protein is 3-hydroxyacyl-[acyl-carrier-protein] dehydratase FabZ (fabZ2).